Here is a 207-residue protein sequence, read N- to C-terminus: Ras-related protein Rab-8A (207 aa).

S17, G18, V19, G20, K21, T22, C23, S39, and T40 together coordinate GTP. T22 contributes to the Mg(2+) binding site. 2 consecutive short sequence motifs (switch) follow at residues 31–45 and 63–80; these read DAFN…GIDF and DTAG…YYRG. Mg(2+)-binding residues include T40 and D63. GTP is bound by residues G66, N121, K122, D124, A152, and K153. C204 bears the Cysteine methyl ester mark. C204 carries the S-geranylgeranyl cysteine lipid modification. Positions 205–207 are cleaved as a propeptide — removed in mature form; it reads VLL.

Belongs to the small GTPase superfamily. Rab family. Mg(2+) serves as cofactor.

Its subcellular location is the cell membrane. It localises to the golgi apparatus. The protein resides in the endosome membrane. The protein localises to the recycling endosome membrane. It is found in the cell projection. Its subcellular location is the cilium. It localises to the cytoplasmic vesicle. The protein resides in the phagosome membrane. The protein localises to the cytoplasm. It is found in the cytoskeleton. Its subcellular location is the microtubule organizing center. It localises to the centrosome. The protein resides in the centriole. The protein localises to the cilium basal body. It is found in the midbody. The catalysed reaction is GTP + H2O = GDP + phosphate + H(+). With respect to regulation, regulated by guanine nucleotide exchange factors (GEFs) which promote the exchange of bound GDP for free GTP, GTPase activating proteins (GAPs) which increase the GTP hydrolysis activity, and GDP dissociation inhibitors (GDIs) which inhibit the dissociation of the nucleotide from the GTPase. Activated in response to insulin. Functionally, the small GTPases Rab are key regulators of intracellular membrane trafficking, from the formation of transport vesicles to their fusion with membranes. Rabs cycle between an inactive GDP-bound form and an active GTP-bound form that is able to recruit to membranes different sets of downstream effectors directly responsible for vesicle formation, movement, tethering and fusion. RAB8A is involved in polarized vesicular trafficking and neurotransmitter release. Together with RAB11A, RAB3IP, the exocyst complex, PARD3, PRKCI, ANXA2, CDC42 and DNMBP promotes transcytosis of PODXL to the apical membrane initiation sites (AMIS), apical surface formation and lumenogenesis. Regulates the compacted morphology of the Golgi. Together with MYO5B and RAB11A participates in epithelial cell polarization. Also involved in membrane trafficking to the cilium and ciliogenesis. Together with MICALL2, may also regulate adherens junction assembly. May play a role in insulin-induced transport to the plasma membrane of the glucose transporter GLUT4 and therefore play a role in glucose homeostasis. Involved in autophagy. Participates in the export of a subset of neosynthesized proteins through a Rab8-Rab10-Rab11-dependent endososomal export route. Targeted to and stabilized on stressed lysosomes through LRRK2 phosphorylation. Suppresses stress-induced lysosomal enlargement through EHBP1 and EHNP1L1 effector proteins. This Gallus gallus (Chicken) protein is Ras-related protein Rab-8A (RAB8A).